Here is a 272-residue protein sequence, read N- to C-terminus: MWPAQLLSQLLPLWPLLLLPLSLPAQGSSHRSPPAPARPPCVRGGPSAPRHVCVWERAPPPSRSPRVPRSRRQVLPGTAPPATPSGFEEGPPSSQYPWAIVWGPTVSREDGGDPNSVNPGFLPLDYGFAAPHGLATPHPNSDSMRDDGDGLILGETPATLRPFLFGGRGEGVDPQLYVTITISIIIVLVATGIIFKFCWDRSQKRRRPSGQQGALRQEESQQPLTDLSPAGVTVLGAFGDSPTPTPDHEEPRGGPRPGMPQPKGAPAFQLNR.

Positions 1–27 are cleaved as a signal peptide; it reads MWPAQLLSQLLPLWPLLLLPLSLPAQG. The segment at 25-93 is disordered; it reads AQGSSHRSPP…PSGFEEGPPS (69 aa). Topologically, residues 28–174 are extracellular; that stretch reads SSHRSPPAPA…FGGRGEGVDP (147 aa). Thr136 carries an O-linked (GalNAc...) threonine glycan. Residues 175 to 195 form a helical membrane-spanning segment; it reads QLYVTITISIIIVLVATGIIF. Residues 196-272 are Cytoplasmic-facing; it reads KFCWDRSQKR…KGAPAFQLNR (77 aa). Residues 205-272 are disordered; sequence RRRPSGQQGA…KGAPAFQLNR (68 aa). Over residues 209–225 the composition is skewed to polar residues; sequence SGQQGALRQEESQQPLT.

O-glycosylation at Thr-136 is essential for recognition by PILRA.

The protein localises to the membrane. Functionally, acts as a ligand for PILRA in neuronal tissues, where it may be involved in immune regulation. The polypeptide is PILR alpha-associated neural protein (Pianp) (Rattus norvegicus (Rat)).